A 151-amino-acid polypeptide reads, in one-letter code: Small ribosomal subunit protein uS11 (151 aa).

A disordered region spans residues aspartate 131–leucine 151. The span at arginine 142–leucine 151 shows a compositional bias: basic residues.

The protein belongs to the universal ribosomal protein uS11 family.

In Bombyx mori (Silk moth), this protein is Small ribosomal subunit protein uS11.